A 520-amino-acid chain; its full sequence is Laccase-1 (520 aa).

Positions 1–19 (MRLSNALVLVAACISSVVA) are cleaved as a signal peptide. 3 consecutive Plastocyanin-like domains span residues 21–145 (TRTF…FIVY), 157–305 (VDDE…LTLA), and 375–488 (TVPV…FAEA). Cu cation-binding residues include histidine 82 and histidine 84. Cystine bridges form between cysteine 103–cysteine 509 and cysteine 135–cysteine 229. Residue asparagine 108 is glycosylated (N-linked (GlcNAc...) asparagine). 2 residues coordinate Cu cation: histidine 127 and histidine 129. Residues asparagine 239 and asparagine 299 are each glycosylated (N-linked (GlcNAc...) asparagine). The Cu cation site is built by histidine 417, histidine 420, histidine 422, histidine 470, cysteine 471, histidine 472, and histidine 476. Asparagine 492 is a glycosylation site (N-linked (GlcNAc...) asparagine).

The protein belongs to the multicopper oxidase family. It depends on Cu cation as a cofactor.

Its subcellular location is the secreted. It carries out the reaction 4 hydroquinone + O2 = 4 benzosemiquinone + 2 H2O. Lignin degradation and detoxification of lignin-derived products. This Agaricus bisporus (White button mushroom) protein is Laccase-1 (lcc1).